We begin with the raw amino-acid sequence, 193 residues long: dTTP/UTP pyrophosphatase (193 aa).

Catalysis depends on D77, which acts as the Proton acceptor.

It belongs to the Maf family. YhdE subfamily. Requires a divalent metal cation as cofactor.

It localises to the cytoplasm. It catalyses the reaction dTTP + H2O = dTMP + diphosphate + H(+). The catalysed reaction is UTP + H2O = UMP + diphosphate + H(+). In terms of biological role, nucleoside triphosphate pyrophosphatase that hydrolyzes dTTP and UTP. May have a dual role in cell division arrest and in preventing the incorporation of modified nucleotides into cellular nucleic acids. In Phocaeicola vulgatus (strain ATCC 8482 / DSM 1447 / JCM 5826 / CCUG 4940 / NBRC 14291 / NCTC 11154) (Bacteroides vulgatus), this protein is dTTP/UTP pyrophosphatase.